The sequence spans 448 residues: Histidinol dehydrogenase (448 aa).

Residues Tyr-136, Gln-197, and Asn-220 each contribute to the NAD(+) site. Substrate-binding residues include Ser-243, Gln-265, and His-268. Zn(2+) is bound by residues Gln-265 and His-268. Catalysis depends on proton acceptor residues Glu-333 and His-334. Residues His-334, Asp-367, Glu-421, and His-426 each coordinate substrate. Asp-367 provides a ligand contact to Zn(2+). His-426 lines the Zn(2+) pocket.

This sequence belongs to the histidinol dehydrogenase family. Zn(2+) serves as cofactor.

It catalyses the reaction L-histidinol + 2 NAD(+) + H2O = L-histidine + 2 NADH + 3 H(+). It functions in the pathway amino-acid biosynthesis; L-histidine biosynthesis; L-histidine from 5-phospho-alpha-D-ribose 1-diphosphate: step 9/9. Functionally, catalyzes the sequential NAD-dependent oxidations of L-histidinol to L-histidinaldehyde and then to L-histidine. The sequence is that of Histidinol dehydrogenase from Pseudomonas syringae pv. tomato (strain ATCC BAA-871 / DC3000).